The sequence spans 372 residues: N-acetylneuraminate epimerase 1 (372 aa).

Residues 1-25 (MITMKVKNFIYLPFCLFIGTSVAGA) form the signal peptide. 7 Kelch repeats span residues 44–88 (KIYI…TIID), 90–141 (KIYV…FIHN), 143–177 (HAVSTGGVNENIFNGYFSDVELSKGNSALTEKVNR), 178–223 (DYFS…IFAE), 226–269 (IYIL…VSGA), 291–340 (EKYS…PWQG), and 342–371 (MLILGGEKKDGKAVSDVIYLKKNDKQIKIV). The Proton acceptor role is filled by Glu232.

It belongs to the NanM family. Homodimer.

It localises to the periplasm. The catalysed reaction is N-acetyl-alpha-neuraminate = N-acetyl-beta-neuraminate. Its function is as follows. Converts alpha-N-acetylneuranimic acid (Neu5Ac) to the beta-anomer, accelerating the equilibrium between the alpha- and beta-anomers. Probably facilitates sialidase-negative bacteria to compete successfully for limited amounts of extracellular Neu5Ac, which is likely taken up in the beta-anomer. In addition, the rapid removal of sialic acid from solution might be advantageous to the bacterium to damp down host responses. This chain is N-acetylneuraminate epimerase 1, found in Escherichia coli O6:H1 (strain CFT073 / ATCC 700928 / UPEC).